The sequence spans 1115 residues: Calcium-transporting ATPase PAT1 (1115 aa).

At 1–99 (MTGSHEMESI…SIVLDALSDH (99 aa)) the chain is on the stromal side. Residues 100 to 120 (ILILLIVAAVVSIVLGSIDYT) form a helical membrane-spanning segment. Topologically, residues 121–126 (SDHPET) are lumenal. A helical transmembrane segment spans residues 127–147 (GWIDGVAILVAVILVVGITSL). Topologically, residues 148–235 (NDFKNQARFR…KGQPQDNMDP (88 aa)) are stromal. The chain crosses the membrane as a helical span at residues 236 to 256 (FLISGSMVIEGFGTMLVTAVG). The Lumenal segment spans residues 257 to 287 (VNSFNGKTMMGLRVASEDTPLQMKLSVLASR). The chain crosses the membrane as a helical span at residues 288-308 (IGYFGMGAAILMLLIAIPKYF). The Stromal portion of the chain corresponds to 309–328 (IQRKVHDIEITREDAQPIVQ). A helical transmembrane segment spans residues 329 to 349 (LVISAITIVVVAVPEGLPLAV). Topologically, residues 350 to 735 (TMALAYGMMK…GRNIYDAICK (386 aa)) are lumenal. D385 functions as the 4-aspartylphosphate intermediate in the catalytic mechanism. D678 and D682 together coordinate Mg(2+). Residues 736–756 (FLQFQLTVNVVAVTVAFIGTL) form a helical membrane-spanning segment. The Stromal segment spans residues 757 to 832 (TSDVVEDKDN…GKNAPLITRS (76 aa)). The interval 762 to 784 (EDKDNSSSSGSADKVTEEEPRQG) is disordered. The chain crosses the membrane as a helical span at residues 833–853 (MWKNIIGQAALQLAILFTILY). The Lumenal portion of the chain corresponds to 854–873 (QGHNIFQHFVPQAHGPIIKN). A helical transmembrane segment spans residues 874–894 (GLHHYTLVFNCFVFLQLFNEI). The Stromal portion of the chain corresponds to 895 to 913 (NARVLGSRTNPFKNFFNNP). The chain crosses the membrane as a helical span at residues 914-934 (IFIAVMIFTLGVQIIFVTFGG). At 935 to 943 (SATSTDSLY) the chain is on the lumenal side. The chain crosses the membrane as a helical span at residues 944 to 964 (IVEWICCVVVGAISLPVGLLL). At 965 to 1115 (RKIPIREPVV…LHLPVNQINN (151 aa)) the chain is on the stromal side. Residues 984-1056 (AVYTSPSPNP…IPSSSSNLVN (73 aa)) are disordered. The segment covering 1040–1053 (NDNINTPIPSSSSN) has biased composition (low complexity).

Belongs to the cation transport ATPase (P-type) (TC 3.A.3) family. Type IIB subfamily.

It is found in the contractile vacuole membrane. Its subcellular location is the cell membrane. It carries out the reaction Ca(2+)(in) + ATP + H2O = Ca(2+)(out) + ADP + phosphate + H(+). Its function is as follows. Calcium ATPase involved in Ca(2+) homeostasis as a component of the contractile vacuole complex. This is Calcium-transporting ATPase PAT1 (patA) from Dictyostelium discoideum (Social amoeba).